A 520-amino-acid chain; its full sequence is Versicolorin B desaturase (520 aa).

The helical transmembrane segment at 22–42 (IFTTILSIFGIALSAVAAWGI) threads the bilayer. N-linked (GlcNAc...) asparagine glycans are attached at residues Asn266 and Asn426. Cys462 serves as a coordination point for heme.

The protein belongs to the cytochrome P450 family. Requires heme as cofactor.

The protein localises to the membrane. The enzyme catalyses versicolorin B + NADPH + O2 + H(+) = versicolorin A + NADP(+) + 2 H2O. Its pathway is mycotoxin biosynthesis. Its function is as follows. Versicolorin B desaturase; part of the fragmented gene cluster that mediates the biosynthesis of dothistromin (DOTH), a polyketide toxin very similar in structure to the aflatoxin precursor, versicolorin B. The first step of the pathway is the conversion of acetate to norsolorinic acid (NOR) and requires the fatty acid synthase subunits hexA and hexB, as well as the polyketide synthase pksA. PksA combines a hexanoyl starter unit and 7 malonyl-CoA extender units to synthesize the precursor NOR. The hexanoyl starter unit is provided to the acyl-carrier protein (ACP) domain by the fungal fatty acid synthase hexA/hexB. The second step is the conversion of NOR to averantin (AVN) and requires the norsolorinic acid ketoreductase nor1, which catalyzes the dehydration of norsolorinic acid to form (1'S)-averantin. The cytochrome P450 monooxygenase avnA then catalyzes the hydroxylation of AVN to 5'hydroxyaverantin (HAVN). The next step is performed by adhA that transforms HAVN to averufin (AVF). Averufin might then be converted to hydroxyversicolorone by cypX and avfA. Hydroxyversicolorone is further converted versiconal hemiacetal acetate (VHA) by moxY. VHA is then the substrate for the versiconal hemiacetal acetate esterase est1 to yield versiconal (VAL). Versicolorin B synthase vbsA then converts VAL to versicolorin B (VERB) by closing the bisfuran ring. Then, the activity of the versicolorin B desaturase verB leads to versicolorin A (VERA). DotB, a predicted chloroperoxidase, may perform epoxidation of the A-ring of VERA. Alternatively, a cytochrome P450, such as cypX or avnA could catalyze this step. It is also possible that another, uncharacterized, cytochrome P450 enzyme is responsible for this step. Opening of the epoxide could potentially be achieved by the epoxide hydrolase epoA. However, epoA seems not to be required for DOTH biosynthesis, but other epoxide hydrolases may have the ability to complement this hydrolysis. Alternatively, opening of the epoxide ring could be achieved non-enzymatically. The next step is the deoxygenation of ring A to yield the 5,8-dihydroxyanthraquinone which is most likely catalyzed by the NADPH dehydrogenase encoded by ver1. The last stages of DOTH biosynthesis are proposed to involve hydroxylation of the bisfuran. OrdB and norB might have oxidative roles here. An alternative possibility is that cytochrome P450 monoogenases such as avnA and cypX might perform these steps in addition to previously proposed steps. This Dothistroma septosporum (strain NZE10 / CBS 128990) (Red band needle blight fungus) protein is Versicolorin B desaturase.